We begin with the raw amino-acid sequence, 240 residues long: Biosynthetic peptidoglycan transglycosylase (240 aa).

A helical membrane pass occupies residues 12–31; that stretch reads ALMWFMVGSVLLVLLLRFVP.

This sequence belongs to the glycosyltransferase 51 family.

The protein localises to the cell inner membrane. It catalyses the reaction [GlcNAc-(1-&gt;4)-Mur2Ac(oyl-L-Ala-gamma-D-Glu-L-Lys-D-Ala-D-Ala)](n)-di-trans,octa-cis-undecaprenyl diphosphate + beta-D-GlcNAc-(1-&gt;4)-Mur2Ac(oyl-L-Ala-gamma-D-Glu-L-Lys-D-Ala-D-Ala)-di-trans,octa-cis-undecaprenyl diphosphate = [GlcNAc-(1-&gt;4)-Mur2Ac(oyl-L-Ala-gamma-D-Glu-L-Lys-D-Ala-D-Ala)](n+1)-di-trans,octa-cis-undecaprenyl diphosphate + di-trans,octa-cis-undecaprenyl diphosphate + H(+). It participates in cell wall biogenesis; peptidoglycan biosynthesis. In terms of biological role, peptidoglycan polymerase that catalyzes glycan chain elongation from lipid-linked precursors. The sequence is that of Biosynthetic peptidoglycan transglycosylase from Pseudomonas fluorescens (strain ATCC BAA-477 / NRRL B-23932 / Pf-5).